Consider the following 309-residue polypeptide: Glutaminase (309 aa).

Positions 64, 114, 160, 167, 191, 243, and 261 each coordinate substrate.

This sequence belongs to the glutaminase family. In terms of assembly, homotetramer.

It catalyses the reaction L-glutamine + H2O = L-glutamate + NH4(+). This is Glutaminase from Rhizobium leguminosarum bv. trifolii (strain WSM2304).